The primary structure comprises 305 residues: Beta-lactamase ROB-1 (305 aa).

The N-terminal stretch at 1–33 (MLNKLKIGTLLLLTLTACSPNSVHSVTSNPQPA) is a signal peptide. Ser86 (acyl-ester intermediate) is an active-site residue. 248 to 250 (KSG) serves as a coordination point for substrate.

The protein belongs to the class-A beta-lactamase family.

The enzyme catalyses a beta-lactam + H2O = a substituted beta-amino acid. This chain is Beta-lactamase ROB-1 (rob1), found in Actinobacillus pleuropneumoniae (Haemophilus pleuropneumoniae).